The following is a 464-amino-acid chain: tRNA-2-methylthio-N(6)-dimethylallyladenosine synthase (464 aa).

The MTTase N-terminal domain maps to 19-135 (GSYWITTFGC…LENLLGKVDL (117 aa)). [4Fe-4S] cluster-binding residues include C28, C64, C98, C170, C174, and C177. Residues 156–393 (RESSICGWVN…NELVETTSKQ (238 aa)) form the Radical SAM core domain. The TRAM domain occupies 396 to 464 (ERYLDSIESV…PFSLTGILCL (69 aa)).

It belongs to the methylthiotransferase family. MiaB subfamily. As to quaternary structure, monomer. It depends on [4Fe-4S] cluster as a cofactor.

It is found in the cytoplasm. It catalyses the reaction N(6)-dimethylallyladenosine(37) in tRNA + (sulfur carrier)-SH + AH2 + 2 S-adenosyl-L-methionine = 2-methylsulfanyl-N(6)-dimethylallyladenosine(37) in tRNA + (sulfur carrier)-H + 5'-deoxyadenosine + L-methionine + A + S-adenosyl-L-homocysteine + 2 H(+). Its function is as follows. Catalyzes the methylthiolation of N6-(dimethylallyl)adenosine (i(6)A), leading to the formation of 2-methylthio-N6-(dimethylallyl)adenosine (ms(2)i(6)A) at position 37 in tRNAs that read codons beginning with uridine. In Prochlorococcus marinus (strain MIT 9215), this protein is tRNA-2-methylthio-N(6)-dimethylallyladenosine synthase.